Reading from the N-terminus, the 142-residue chain is Glia maturation factor gamma (142 aa).

The residue at position 2 (serine 2) is an N-acetylserine. Positions 4–139 constitute an ADF-H domain; the sequence is SLVVCDVDPE…NETWLKEKLA (136 aa).

Belongs to the actin-binding proteins ADF family. GMF subfamily. As to expression, expressed in rat thymus, testis, and spleen. Is present predominantly in proliferative and differentiative organs.

The protein is Glia maturation factor gamma (Gmfg) of Rattus norvegicus (Rat).